The following is a 439-amino-acid chain: Paraneoplastic antigen-like protein 8A (439 aa).

Residues Ser-208–Val-439 are disordered. Positions Leu-231 to Asn-249 are enriched in basic residues. 3 stretches are compositionally biased toward basic and acidic residues: residues Gly-314–Ala-326, Ser-395–Ala-404, and Ala-423–Val-439.

Belongs to the PNMA family.

The chain is Paraneoplastic antigen-like protein 8A from Homo sapiens (Human).